The sequence spans 655 residues: MASTDYSTYSQAAAQQGYSAYTAQPTQGYAQTTQAYGQQSYGTYGQPTDVSYTQAQTTATYGQTAYATSYGQPPTGYSTPTAPQAYSQPVQGYGTGTYDSTTATVTTTQASYAAQTAYGTQPAYPTYGQQPTATAPTRPQDGNKPAETSQPQSSTGGYNQPSLGYGQSNYSYPQVPGSYPMQPVTAPPSYPPTSYSSSQPTSYDQSSYSQQNTYGQPSSYGQQSSYGQQSSYGQQPPTSYPPQTGSYSQAPSQYSQQSSSYGQQSSFRQDHPSSMGVYGQESGGFSGPGENRSLSGPDNRGRGRGGFDRGGMSRGGRGGGRGGLGAGERGGFNKPGGPMDEGPDLDLGLPIDPDEDSDNSAIYVQGLNDNVTLDDLADFFKQCGVVKMNKRTGQPMIHIYLDKETGKPKGDATVSYEDPPTAKAAVEWFDGKDFQGSKLKVSLARKKPPMNSMRGGMPPREGRGMPPPLRGGPGGPGGPGGPMGRMGGRGGDRGGFPPRGPRGSRGNPSGGGNVQHRAGDWQCPNPGCGNQNFAWRTECNQCKAPKPEGFLPPPFPPPGGDRGRGGPGGMRGGRGGLMDRGGPGGMFRGGRGGDRGGFRGGRGMDRGGFGGGRRGGPGGPPGPLMEQMGGRRGGRGGPGKMDKGEHRQERRDRPY.

An EAD (Gln/Pro/Thr-rich) region spans residues 1 to 285 (MASTDYSTYS…GVYGQESGGF (285 aa)). 31 consecutive repeat copies span residues 8–16 (TYSQAAAQQ), 17–27 (GYSAYTAQPTQ), 28–34 (GYAQTTQ), 35–42 (AYGQQSYG), 43–50 (TYGQPTDV), 51–59 (SYTQAQTTA), 60–68 (TYGQTAYAT), 69–75 (SYGQPPT), 76–84 (GYSTPTAPQ), 85–91 (AYSQPVQ), 92–110 (GYGT…TTQA), 111–116 (SYAAQT), 117–125 (AYGTQPAYP), 126–156 (TYGQ…SSTG), 157–163 (GYNQPSL), 164–170 (GYGQSNY), 171–177 (SYPQVPG), 178–188 (SYPMQPVTAPP), 189–193 (SYPPT), 194–201 (SYSSSQPT), 202–206 (SYDQS), 207–212 (SYSQQN), 213–218 (TYGQPS), 219–224 (SYGQQS), 225–230 (SYGQQS), 231–238 (SYGQQPPT), 239–245 (SYPPQTG), 246–252 (SYSQAPS), 253–259 (QYSQQSS), 260–276 (SYGQ…SSMG), and 277–285 (VYGQESGGF). The 31 X approximate tandem repeats stretch occupies residues 8–285 (TYSQAAAQQG…GVYGQESGGF (278 aa)). Residues 121-350 (QPAYPTYGQQ…EGPDLDLGLP (230 aa)) form a disordered region. Polar residues-rich tracts occupy residues 127-137 (YGQQPTATAPT) and 146-172 (AETS…NYSY). Residues 192–266 (PTSYSSSQPT…QSSSYGQQSS (75 aa)) show a composition bias toward low complexity. Residues 256 to 285 (QQSSSYGQQSSFRQDHPSSMGVYGQESGGF) form the IQ domain. A Phosphoserine; by PKC modification is found at Ser266. 7 positions are modified to asymmetric dimethylarginine: Arg300, Arg302, Arg304, Arg309, Arg314, Arg317, and Arg321. Gly residues predominate over residues 308 to 334 (DRGGMSRGGRGGGRGGLGAGERGGFNK). Residues 335 to 350 (PGGPMDEGPDLDLGLP) show a composition bias toward low complexity. In terms of domain architecture, RRM spans 360-446 (SAIYVQGLND…SKLKVSLARK (87 aa)). Lys438 bears the N6-acetyllysine mark. Disordered stretches follow at residues 447 to 524 (KPPM…WQCP) and 544 to 655 (APKP…DRPY). An asymmetric dimethylarginine mark is found at Arg454 and Arg463. Asymmetric dimethylarginine; alternate is present on Arg470. Arg470 carries the omega-N-methylarginine; alternate modification. The segment covering 471–489 (GGPGGPGGPGGPMGRMGGR) has biased composition (gly residues). Arg485 bears the Omega-N-methylarginine mark. Asymmetric dimethylarginine; by PRMT8 is present on Arg489. 3 positions are modified to asymmetric dimethylarginine: Arg493, Arg499, and Arg502. Arg505 is subject to Asymmetric dimethylarginine; alternate. The residue at position 505 (Arg505) is an Omega-N-methylarginine; alternate. The segment at 517–548 (RAGDWQCPNPGCGNQNFAWRTECNQCKAPKPE) adopts a RanBP2-type zinc-finger fold. Positions 550 to 559 (FLPPPFPPPG) are enriched in pro residues. Residues Arg562 and Arg564 each carry the asymmetric dimethylarginine modification. A compositionally biased stretch (gly residues) spans 565-590 (GGPGGMRGGRGGLMDRGGPGGMFRGG). An Asymmetric dimethylarginine; alternate; by PRMT8 modification is found at Arg571. Residue Arg571 is modified to Omega-N-methylarginine; alternate; by PRMT8. Residues Arg574, Arg580, Arg588, and Arg591 each carry the asymmetric dimethylarginine modification. Residues 591 to 605 (RGGDRGGFRGGRGMD) show a composition bias toward basic and acidic residues. Arg595 carries the post-translational modification Asymmetric dimethylarginine; alternate; by PRMT8. Arg595 is modified (omega-N-methylarginine; alternate; by PRMT8). Arg599 is modified (asymmetric dimethylarginine). Asymmetric dimethylarginine; by PRMT8 is present on Arg602. Arg606 is subject to Asymmetric dimethylarginine; alternate; by PRMT8. Arg606 carries the omega-N-methylarginine; alternate; by PRMT8 modification. Over residues 606–617 (RGGFGGGRRGGP) the composition is skewed to gly residues. At Arg614 the chain carries Asymmetric dimethylarginine; alternate. An Omega-N-methylarginine; alternate modification is found at Arg614. 2 positions are modified to asymmetric dimethylarginine: Arg632 and Arg635. The short motif at 638-655 (PGKMDKGEHRQERRDRPY) is the Nuclear localization signal element. The span at 640–655 (KMDKGEHRQERRDRPY) shows a compositional bias: basic and acidic residues.

Belongs to the RRM TET family. As to quaternary structure, binds RNA, POLR2C, SF1 and calmodulin. Interacts with PTK2B and TDRD3. Forms a complex with REC8, PRDM9, SYCP3 and SYCP1; complex formation is dependent of phosphorylated form of REC8 and requires PRDM9 bound to hotspot DNA; EWSR1 joins PRDM9 with the chromosomal axis through REC8. Phosphorylated; calmodulin-binding inhibits phosphorylation of Ser-266. Post-translationally, highly methylated on arginine residues. Methylation is mediated by PRMT1 and, at lower level by PRMT8.

The protein resides in the nucleus. It localises to the cytoplasm. Its subcellular location is the cell membrane. In terms of biological role, binds to ssRNA containing the consensus sequence 5'-AGGUAA-3'. Might function as a transcriptional repressor. The protein is RNA-binding protein EWS (Ewsr1) of Mus musculus (Mouse).